The primary structure comprises 336 residues: Inactive serine/threonine-protein kinase BKN2 (336 aa).

The interval Met1–Ser25 is disordered. A lipid anchor (N-myristoyl glycine) is attached at Gly2. The S-palmitoyl cysteine moiety is linked to residue Cys4. In terms of domain architecture, Protein kinase spans Tyr52–Ala332.

It belongs to the protein kinase superfamily. Ser/Thr protein kinase family. As to quaternary structure, component of an immune signaling complex made of, at least, SZE1, BKN2/SZE2, ZAR1 and ZED1. Interacts directly with ZAR1 and Pseudomonas syringae HOPZ1A at the plasma membrane. Post-translationally, N-terminal myristoylation is critical for plasma membrane localization and implication in defense responses. Expressed in stigma and ovaries in flowers, and in stems and seedlings.

Its subcellular location is the cell membrane. In terms of biological role, together with SZE1 and ZED1, required for effector-triggered immunity (e.g. Pseudomonas syringae type III effector HopZ1a) via the activation of ZAR1, thus being essential for resistance against P. syringae pv. tomato DC3000 expressing HopZ1a. Collaboratively with BKN1, involved in compatible pollen-stigma interactions. This chain is Inactive serine/threonine-protein kinase BKN2, found in Arabidopsis thaliana (Mouse-ear cress).